The sequence spans 212 residues: Large ribosomal subunit protein uL3 (212 aa).

The tract at residues 136–155 (THGNSVSHRVLGSTGQNQTP) is disordered. Residue Gln153 is modified to N5-methylglutamine.

This sequence belongs to the universal ribosomal protein uL3 family. As to quaternary structure, part of the 50S ribosomal subunit. Forms a cluster with proteins L14 and L19. In terms of processing, methylated by PrmB.

In terms of biological role, one of the primary rRNA binding proteins, it binds directly near the 3'-end of the 23S rRNA, where it nucleates assembly of the 50S subunit. The polypeptide is Large ribosomal subunit protein uL3 (Acinetobacter baumannii (strain AB307-0294)).